The primary structure comprises 310 residues: MFKHVTVLLKETVDGLDIKPSGTYVDCTLGGGGHSSYLLSQLTDGGKLIAFDQDEIAIQNAKEKFSSYGEQFVTVKSNFRYLSEKLHELGITEVDGILFDLGVSSPQLDTPERGFSYHHDAPLDMRMDQDAPLTAYDVVNSWSYEQLVRIFFQYGEEKFSKQITRKIEAYRENKAIETTGELVELIKEGIPAPARRTGGHPAKRVFQAIRIAVNDELKVFEEALESAIDMVKPGGRVSVITFHSLEDRICKTTFKRNSTTPQLPQGLPIIPDEFKPKLKLITRKPILPSDIELEENNRARSAKLRIAEKR.

S-adenosyl-L-methionine contacts are provided by residues 32–34 (GGH), D52, F79, D100, and Q107.

It belongs to the methyltransferase superfamily. RsmH family.

The protein localises to the cytoplasm. The catalysed reaction is cytidine(1402) in 16S rRNA + S-adenosyl-L-methionine = N(4)-methylcytidine(1402) in 16S rRNA + S-adenosyl-L-homocysteine + H(+). In terms of biological role, specifically methylates the N4 position of cytidine in position 1402 (C1402) of 16S rRNA. This chain is Ribosomal RNA small subunit methyltransferase H, found in Bacillus mycoides (strain KBAB4) (Bacillus weihenstephanensis).